The chain runs to 256 residues: Small ribosomal subunit protein eS1 (256 aa).

Residues 1–18 (MAVGKNKRLSKGKKGIKK) show a composition bias toward basic residues. The tract at residues 1 to 20 (MAVGKNKRLSKGKKGIKKRT) is disordered. Alanine 2 carries the N-acetylalanine; partial modification.

It belongs to the eukaryotic ribosomal protein eS1 family. Component of the small ribosomal subunit. Mature ribosomes consist of a small (40S) and a large (60S) subunit. The 40S subunit contains about 33 different proteins and 1 molecule of RNA (18S). The 60S subunit contains about 49 different proteins and 3 molecules of RNA (25S, 5.8S and 5S).

Its subcellular location is the cytoplasm. This chain is Small ribosomal subunit protein eS1 (rps1), found in Aspergillus terreus (strain NIH 2624 / FGSC A1156).